The sequence spans 344 residues: MKTQWNFEKVKELFDQPFFDILFLAQNIHRKNFNANQIQISTLLSIKTGACPEDCKYCPQSARYKTNIKIEKLLTLKQILKSAQQAKKLGSTRFCMGAAWKNPKERDMHFLKTVIQEVKKLGLETCMTLGTLHNDQADRLAKAGLDFYNHNLDTSKSYYQKIVTTRTYQDRLNTLKKVRKSGMKICSGGILGLGEKLKDRIELLIELSNLEIAPESIPINMLVKVKGTPLENQTSIDTFDFIKTIAITRIMMPTSYIRLSAGRENMNEQTQAMCFLSGANSIFYGCKLLTTPNPKKERDKQLFSKLGLNIKHKNTNLNYSILSDNSLNYTSKIHSQQFYNAETA.

One can recognise a Radical SAM core domain in the interval 36–260 (NQIQISTLLS…MMPTSYIRLS (225 aa)). Residues cysteine 51, cysteine 55, and cysteine 58 each contribute to the [4Fe-4S] cluster site. [2Fe-2S] cluster contacts are provided by cysteine 95, cysteine 126, cysteine 186, and arginine 258.

It belongs to the radical SAM superfamily. Biotin synthase family. As to quaternary structure, homodimer. [4Fe-4S] cluster serves as cofactor. It depends on [2Fe-2S] cluster as a cofactor.

The enzyme catalyses (4R,5S)-dethiobiotin + (sulfur carrier)-SH + 2 reduced [2Fe-2S]-[ferredoxin] + 2 S-adenosyl-L-methionine = (sulfur carrier)-H + biotin + 2 5'-deoxyadenosine + 2 L-methionine + 2 oxidized [2Fe-2S]-[ferredoxin]. It participates in cofactor biosynthesis; biotin biosynthesis; biotin from 7,8-diaminononanoate: step 2/2. In terms of biological role, catalyzes the conversion of dethiobiotin (DTB) to biotin by the insertion of a sulfur atom into dethiobiotin via a radical-based mechanism. This chain is Biotin synthase, found in Buchnera aphidicola subsp. Baizongia pistaciae (strain Bp).